Here is a 396-residue protein sequence, read N- to C-terminus: Elongation factor Tu (396 aa).

The tr-type G domain maps to 10-206 (KPHVNIGTIG…AVDESVPDPV (197 aa)). The G1 stretch occupies residues 19–26 (GHVDHGKT). 19 to 26 (GHVDHGKT) contributes to the GTP binding site. Residue threonine 26 coordinates Mg(2+). A G2 region spans residues 62 to 66 (GITIN). The segment at 83–86 (DAPG) is G3. GTP is bound by residues 83–87 (DAPGH) and 138–141 (NKSD). The segment at 138–141 (NKSD) is G4. A G5 region spans residues 176–178 (SGL).

Belongs to the TRAFAC class translation factor GTPase superfamily. Classic translation factor GTPase family. EF-Tu/EF-1A subfamily. Monomer.

Its subcellular location is the cytoplasm. It catalyses the reaction GTP + H2O = GDP + phosphate + H(+). In terms of biological role, GTP hydrolase that promotes the GTP-dependent binding of aminoacyl-tRNA to the A-site of ribosomes during protein biosynthesis. The chain is Elongation factor Tu from Paenarthrobacter aurescens (strain TC1).